The chain runs to 254 residues: Short-chain dehydrogenase srdF (254 aa).

NADP(+) is bound by residues isoleucine 18, serine 37, glutamate 67, asparagine 95, tyrosine 167, lysine 171, valine 199, and threonine 201. Tyrosine 167 (proton donor) is an active-site residue. Lysine 171 functions as the Lowers pKa of active site Tyr in the catalytic mechanism.

Belongs to the short-chain dehydrogenases/reductases (SDR) family.

Functionally, short-chain dehydrogenase; part of the gene cluster that mediates the biosynthesis of sordarial, a salicylic aldehyde structurally related to the phytotoxin pyriculol. The most interesting aspect of this pathway is formation of an aromatic product from the highly reducing polyketide synthase srdA. SrdA synthesizes a reduced polyketide chain from one molecule of acetyl-CoA and five molecules of malonyl-CoA. The polyketide chain is then reductively released as an aldehyde. The oxidoreductases srdC, srdD and srdE then oxidize one of the hydroxy groups to facilitate the intramolecular aldol condensation, followed by dehydration to yield a salicylic aldehyde. This aldehyde can undergo facile reduction by endogenous reductases to yield the alcohol 1-hydroxy-2-hydroxymethyl-3-pent-1,3-dienylbenzene. The flavin-dependent srdI counteract against the propensity of the aldehydes to be reduced under physiological conditions and is responsible for reoxidizing 1-hydroxy-2-hydroxymethyl-3-pent-1,3-dienylbenzene back to the salicylic aldehyde. This salicylic aldehyde is then selectively epoxidized by the cupin-domain-containing oxidoreductase srdB to yield the epoxide, which can be hydrolyzed stereoselectively by the hydrolase srdG to give the final product sordarial. In Neurospora crassa (strain ATCC 24698 / 74-OR23-1A / CBS 708.71 / DSM 1257 / FGSC 987), this protein is Short-chain dehydrogenase srdF.